Here is a 1367-residue protein sequence, read N- to C-terminus: DNA polymerase III PolC-type (1367 aa).

The Exonuclease domain maps to 358-513; the sequence is FVVLDFETTG…DDARVTAQVF (156 aa).

It belongs to the DNA polymerase type-C family. PolC subfamily.

It is found in the cytoplasm. It catalyses the reaction DNA(n) + a 2'-deoxyribonucleoside 5'-triphosphate = DNA(n+1) + diphosphate. Functionally, required for replicative DNA synthesis. This DNA polymerase also exhibits 3' to 5' exonuclease activity. This chain is DNA polymerase III PolC-type, found in Thermotoga maritima (strain ATCC 43589 / DSM 3109 / JCM 10099 / NBRC 100826 / MSB8).